A 478-amino-acid chain; its full sequence is ATP synthase subunit beta (478 aa).

Residue 164–171 participates in ATP binding; it reads GGAGVGKT.

The protein belongs to the ATPase alpha/beta chains family. As to quaternary structure, F-type ATPases have 2 components, CF(1) - the catalytic core - and CF(0) - the membrane proton channel. CF(1) has five subunits: alpha(3), beta(3), gamma(1), delta(1), epsilon(1). CF(0) has three main subunits: a(1), b(2) and c(9-12). The alpha and beta chains form an alternating ring which encloses part of the gamma chain. CF(1) is attached to CF(0) by a central stalk formed by the gamma and epsilon chains, while a peripheral stalk is formed by the delta and b chains.

The protein localises to the cell membrane. It catalyses the reaction ATP + H2O + 4 H(+)(in) = ADP + phosphate + 5 H(+)(out). Produces ATP from ADP in the presence of a proton gradient across the membrane. The catalytic sites are hosted primarily by the beta subunits. This Streptomyces coelicolor (strain ATCC BAA-471 / A3(2) / M145) protein is ATP synthase subunit beta.